Reading from the N-terminus, the 901-residue chain is HTH-type transcriptional regulator MalT (901 aa).

Residue 39-46 (SPAGYGKT) participates in ATP binding. Positions 829–894 (ELIRTSPLTQ…AAVQHAQKLL (66 aa)) constitute an HTH luxR-type domain. Residues 853 to 872 (NEQIAGELEVAATTIKTHIR) constitute a DNA-binding region (H-T-H motif).

Belongs to the MalT family. In terms of assembly, monomer in solution. Oligomerizes to an active state in the presence of the positive effectors ATP and maltotriose.

With respect to regulation, activated by ATP and maltotriose, which are both required for DNA binding. Functionally, positively regulates the transcription of the maltose regulon whose gene products are responsible for uptake and catabolism of malto-oligosaccharides. Specifically binds to the promoter region of its target genes, recognizing a short DNA motif called the MalT box. In Shigella flexneri serotype 5b (strain 8401), this protein is HTH-type transcriptional regulator MalT.